Reading from the N-terminus, the 262-residue chain is Sulfite reductase, dissimilatory-type subunit beta (262 aa).

Positions 151, 188, 189, 193, 231, 258, and 261 each coordinate [4Fe-4S] cluster. C193 serves as a coordination point for siroheme.

Heterohexamer of two alpha, two beta and two gamma subunits. Requires [4Fe-4S] cluster as cofactor. The cofactor is siroheme.

It carries out the reaction [DsrC protein]-trisulfide + NAD(+) + 3 H2O = [DsrC protein]-dithiol + sulfite + NADH + 3 H(+). Catalyzes the reduction of sulfite to sulfide. This is the terminal oxidation reaction in sulfate respiration, a process catalyzed by the sulfate-reducing bacteria. This chain is Sulfite reductase, dissimilatory-type subunit beta (dsrB), found in Megalodesulfovibrio gigas (strain ATCC 19364 / DSM 1382 / NCIMB 9332 / VKM B-1759) (Desulfovibrio gigas).